Reading from the N-terminus, the 99-residue chain is Small ribosomal subunit protein cS23 (99 aa).

Belongs to the chloroplast-specific ribosomal protein cS23 family. Part of the 30S ribosomal subunit.

The protein localises to the plastid. It localises to the chloroplast. Its function is as follows. Probably a ribosomal protein or a ribosome-associated protein. The protein is Small ribosomal subunit protein cS23 of Gracilaria tenuistipitata var. liui (Red alga).